The sequence spans 333 residues: 4-hydroxyproline epimerase (333 aa).

C90 functions as the Proton acceptor in the catalytic mechanism. Substrate-binding positions include G91–H92 and D249. The active-site Proton donor is the C253. Substrate is bound at residue G254–T255.

It belongs to the proline racemase family. As to quaternary structure, homodimer.

It catalyses the reaction trans-4-hydroxy-L-proline = cis-4-hydroxy-D-proline. Its function is as follows. Allows intracellular utilization of 4-hydroxyproline, one of the major constituents of host collagen, by converting 4-hydroxy-L-proline to 4-hydroxy-D-proline, which can be further metabolized by intracellular 4-hydroxy-D-proline oxidases. Strong B-cell mitogen. Plays an important role in the regulation of intra- and extracellular amino acid pools, allowing the bacterium to profit from host precursors and enzymatic pathways. This chain is 4-hydroxyproline epimerase, found in Brucella abortus (strain S19).